The sequence spans 304 residues: Acetyl-coenzyme A carboxylase carboxyl transferase subunit beta (304 aa).

Residues 29–298 (LWTKCVSCAA…QAYRPSPQAS (270 aa)) form the CoA carboxyltransferase N-terminal domain. Residues cysteine 33, cysteine 36, cysteine 52, and cysteine 55 each coordinate Zn(2+). A C4-type zinc finger spans residues 33-55 (CVSCAALHYTKDFQLNLCVCPAC).

Belongs to the AccD/PCCB family. In terms of assembly, acetyl-CoA carboxylase is a heterohexamer composed of biotin carboxyl carrier protein (AccB), biotin carboxylase (AccC) and two subunits each of ACCase subunit alpha (AccA) and ACCase subunit beta (AccD). Zn(2+) is required as a cofactor.

The protein resides in the cytoplasm. It catalyses the reaction N(6)-carboxybiotinyl-L-lysyl-[protein] + acetyl-CoA = N(6)-biotinyl-L-lysyl-[protein] + malonyl-CoA. It participates in lipid metabolism; malonyl-CoA biosynthesis; malonyl-CoA from acetyl-CoA: step 1/1. Component of the acetyl coenzyme A carboxylase (ACC) complex. Biotin carboxylase (BC) catalyzes the carboxylation of biotin on its carrier protein (BCCP) and then the CO(2) group is transferred by the transcarboxylase to acetyl-CoA to form malonyl-CoA. The protein is Acetyl-coenzyme A carboxylase carboxyl transferase subunit beta of Gloeobacter violaceus (strain ATCC 29082 / PCC 7421).